The sequence spans 152 residues: UPF0260 protein BAB1_1496 (152 aa).

Belongs to the UPF0260 family.

This Brucella abortus (strain 2308) protein is UPF0260 protein BAB1_1496.